We begin with the raw amino-acid sequence, 257 residues long: Probable enoyl-CoA hydratase echA8 (257 aa).

The protein belongs to the enoyl-CoA hydratase/isomerase family.

The catalysed reaction is a (3S)-3-hydroxyacyl-CoA = a (2E)-enoyl-CoA + H2O. It carries out the reaction a 4-saturated-(3S)-3-hydroxyacyl-CoA = a (3E)-enoyl-CoA + H2O. Could possibly oxidize fatty acids using specific components. This is Probable enoyl-CoA hydratase echA8 (echA8) from Mycobacterium leprae (strain TN).